Consider the following 428-residue polypeptide: Enolase 1 (428 aa).

A disordered region spans residues 38–58; it reads EVPSGASTGENEAVELRDGGS. Glutamine 163 serves as a coordination point for (2R)-2-phosphoglycerate. The active-site Proton donor is glutamate 205. Residues aspartate 242, glutamate 286, and aspartate 313 each coordinate Mg(2+). Lysine 338, arginine 367, serine 368, and lysine 389 together coordinate (2R)-2-phosphoglycerate. Lysine 338 (proton acceptor) is an active-site residue.

This sequence belongs to the enolase family. Requires Mg(2+) as cofactor.

The protein localises to the cytoplasm. The protein resides in the secreted. It localises to the cell surface. It catalyses the reaction (2R)-2-phosphoglycerate = phosphoenolpyruvate + H2O. The protein operates within carbohydrate degradation; glycolysis; pyruvate from D-glyceraldehyde 3-phosphate: step 4/5. In terms of biological role, catalyzes the reversible conversion of 2-phosphoglycerate (2-PG) into phosphoenolpyruvate (PEP). It is essential for the degradation of carbohydrates via glycolysis. The protein is Enolase 1 of Lactobacillus gasseri (strain ATCC 33323 / DSM 20243 / BCRC 14619 / CIP 102991 / JCM 1131 / KCTC 3163 / NCIMB 11718 / NCTC 13722 / AM63).